A 151-amino-acid chain; its full sequence is Protein-export protein SecB (151 aa).

This sequence belongs to the SecB family. Homotetramer, a dimer of dimers. One homotetramer interacts with 1 SecA dimer.

It is found in the cytoplasm. Functionally, one of the proteins required for the normal export of preproteins out of the cell cytoplasm. It is a molecular chaperone that binds to a subset of precursor proteins, maintaining them in a translocation-competent state. It also specifically binds to its receptor SecA. The sequence is that of Protein-export protein SecB from Azoarcus sp. (strain BH72).